The chain runs to 391 residues: Tryptophan synthase beta chain 2 (391 aa).

Lys-83 carries the N6-(pyridoxal phosphate)lysine modification.

Belongs to the TrpB family. As to quaternary structure, tetramer of two alpha and two beta chains. Pyridoxal 5'-phosphate serves as cofactor.

The enzyme catalyses (1S,2R)-1-C-(indol-3-yl)glycerol 3-phosphate + L-serine = D-glyceraldehyde 3-phosphate + L-tryptophan + H2O. The protein operates within amino-acid biosynthesis; L-tryptophan biosynthesis; L-tryptophan from chorismate: step 5/5. In terms of biological role, the beta subunit is responsible for the synthesis of L-tryptophan from indole and L-serine. The sequence is that of Tryptophan synthase beta chain 2 (trpB2) from Chlamydia caviae (strain ATCC VR-813 / DSM 19441 / 03DC25 / GPIC) (Chlamydophila caviae).